A 993-amino-acid polypeptide reads, in one-letter code: Structural polyprotein (993 aa).

Asp11 contacts a divalent metal cation. The 243-residue stretch at 494-736 (ADKGYEVVAN…AGRQYHLAMA (243 aa)) folds into the Peptidase S50 domain. Ser633 acts as the Nucleophile in catalysis. Lys673 is a catalytic residue. The interval 950-993 (AMEMKHRNPRRALPKPKPKPNAPTQRPPGRLGRWIRTVSDEDLE) is disordered. Basic residues predominate over residues 956–967 (RNPRRALPKPKP). The interaction with VP1 protein stretch occupies residues 984-993 (IRTVSDEDLE).

As to quaternary structure, homotrimer. A central divalent metal stabilizes the VP2 trimer. Interacts with host ITGA4/ITGB1. Homodimer. Interacts (via C-terminus) with VP1 in the cytoplasm. Interacts with VP2. Specific enzymatic cleavages yield mature proteins. The capsid assembly seems to be regulated by polyprotein processing. The protease VP4 cleaves itself off the polyprotein, thus releasing pre-VP2 and VP3 within the infected cell. During capsid assembly, the C-terminus of pre-VP2 is further processed by VP4, giving rise to VP2, the external capsid protein and three small peptides that all stay closely associated with the capsid.

Its subcellular location is the virion. The protein localises to the host cytoplasm. Functionally, capsid protein VP2 self assembles to form an icosahedral capsid with a T=13 symmetry, about 70 nm in diameter, and consisting of 260 VP2 trimers. The capsid encapsulates the genomic dsRNA. VP2 is also involved in attachment and entry into the host cell by interacting with host ITGA4/ITGB1. The precursor of VP2 plays an important role in capsid assembly. First, pre-VP2 and VP2 oligomers assemble to form a procapsid. Then, the pre-VP2 intermediates may be processed into VP2 proteins by proteolytic cleavage mediated by VP4 to obtain the mature virion. The final capsid is composed of pentamers and hexamers but VP2 has a natural tendency to assemble into all-pentameric structures. Therefore pre-VP2 may be required to allow formation of the hexameric structures. In terms of biological role, protease VP4 is a serine protease that cleaves the polyprotein into its final products. Pre-VP2 is first partially cleaved, and may be completely processed by VP4 upon capsid maturation. Its function is as follows. Capsid protein VP3 plays a key role in virion assembly by providing a scaffold for the capsid made of VP2. May self-assemble to form a T=4-like icosahedral inner-capsid composed of at least 180 trimers. Plays a role in genomic RNA packaging by recruiting VP1 into the capsid and interacting with the dsRNA genome segments to form a ribonucleoprotein complex. Additionally, the interaction of the VP3 C-terminal tail with VP1 removes the inherent structural blockade of the polymerase active site. Thus, VP3 can also function as a transcriptional activator. Functionally, structural peptide 1 is a small peptide derived from pre-VP2 C-terminus. It destabilizes and perforates cell membranes, suggesting a role during entry. Structural peptide 2 is a small peptide derived from pVP2 C-terminus. It is not essential for the virus viability, but viral growth is affected when missing. In terms of biological role, structural peptide 3 is a small peptide derived from pVP2 C-terminus. It is not essential for the virus viability, but viral growth is affected when missing. Its function is as follows. Structural peptide 4 is a small peptide derived from pVP2 C-terminus. It is essential for the virus viability. This Avian infectious bursal disease virus (strain PBG-98) (IBDV) protein is Structural polyprotein.